The primary structure comprises 460 residues: DNA repair protein RadA (460 aa).

The C4-type zinc-finger motif lies at 11 to 28 (CNECGADYPRWQGQCSAC). Residue 102–109 (GNPGAGKS) participates in ATP binding. The short motif at 258 to 262 (KNRFG) is the RadA KNRFG motif element. The lon-protease-like stretch occupies residues 357–460 (DVFVNVVGGV…ADALSVFDDL (104 aa)).

Belongs to the RecA family. RadA subfamily.

Functionally, DNA-dependent ATPase involved in processing of recombination intermediates, plays a role in repairing DNA breaks. Stimulates the branch migration of RecA-mediated strand transfer reactions, allowing the 3' invading strand to extend heteroduplex DNA faster. Binds ssDNA in the presence of ADP but not other nucleotides, has ATPase activity that is stimulated by ssDNA and various branched DNA structures, but inhibited by SSB. Does not have RecA's homology-searching function. This is DNA repair protein RadA from Salmonella typhimurium (strain LT2 / SGSC1412 / ATCC 700720).